Reading from the N-terminus, the 1154-residue chain is Diacylglycerol kinase eta (1154 aa).

Positions M1 to Q54 are disordered. Residues T59–S152 enclose the PH domain. 2 Phorbol-ester/DAG-type zinc fingers span residues M169–C219 and P241–C292. The DAGKc domain occupies F322–E457. Disordered regions lie at residues Q560–P608, D634–A678, and F1123–N1154. A compositionally biased stretch (acidic residues) spans P573–L586. Positions D656–P667 are enriched in basic and acidic residues. Positions Q1131–N1154 are enriched in polar residues.

Belongs to the eukaryotic diacylglycerol kinase family. Interacts with RAF1 and BRAF. Post-translationally, phosphorylated. Phosphorylation does not inhibit catalytic activity. As to expression, expressed in a wide variety of tissues. Most abundant in the brain and testis; also found in lung, spleen, and prostate (at protein level).

The protein resides in the cytoplasm. The protein localises to the cell membrane. It catalyses the reaction a 1,2-diacyl-sn-glycerol + ATP = a 1,2-diacyl-sn-glycero-3-phosphate + ADP + H(+). The enzyme catalyses 1,2-di-(9Z-octadecenoyl)-sn-glycerol + ATP = 1,2-di-(9Z-octadecenoyl)-sn-glycero-3-phosphate + ADP + H(+). The protein operates within lipid metabolism; glycerolipid metabolism. Functionally, diacylglycerol kinase that converts diacylglycerol/DAG into phosphatidic acid/phosphatidate/PA and regulates the respective levels of these two bioactive lipids. Thereby, acts as a central switch between the signaling pathways activated by these second messengers with different cellular targets and opposite effects in numerous biological processes. Plays a key role in promoting cell growth. Activates the Ras/B-Raf/C-Raf/MEK/ERK signaling pathway induced by EGF. Regulates the recruitment of RAF1 and BRAF from cytoplasm to membranes and their heterodimerization. This Mesocricetus auratus (Golden hamster) protein is Diacylglycerol kinase eta (DGKH).